The sequence spans 226 residues: Tyramine N-feruloyltransferase 4/11 (226 aa).

Residues 29–45 are important in binding site and for catalytic activity; it reads HIYKLFYQIHEYHNYTH. An N-acetyltransferase domain is found at 72-222; the sequence is VLLLEVSPTP…VGDALQKYAD (151 aa).

It belongs to the acetyltransferase family. In terms of assembly, homodimer.

The protein localises to the cytoplasm. The catalysed reaction is tyramine + (E)-feruloyl-CoA = N-[(E)-feruloyl]tyramine + CoA + H(+). Its activity is regulated as follows. Inhibited by (2-hydroxyphenyl)amino sulfinyl acetic acid 1,1-dimethylethyl ester, by DEPC and by N-ethylmaleimide. Synthesizes amides which are involved in stress response in the cell wall. Catalyzes the synthesis of hydroxycinnamic acid amides from hydroxycinnamoyl-CoA thioesters and various hydroxyphenylethylamines such as 4-coumaroyl-CoA and sinapoyl-CoA. The sequence is that of Tyramine N-feruloyltransferase 4/11 (THT4) from Nicotiana tabacum (Common tobacco).